Here is a 239-residue protein sequence, read N- to C-terminus: Riboflavin synthase (239 aa).

Lumazine-binding repeat units follow at residues 1 to 105 (MFTG…MGGH) and 106 to 205 (VVQG…EKQI). Residues 4 to 6 (GLV), 54 to 56 (CLT), 70 to 75 (GISPET), 109 to 111 (GHV), K145, 154 to 156 (SLT), and 170 to 175 (SMVSYT) contribute to the 2,4-dihydroxypteridine site.

In terms of assembly, homotrimer.

It carries out the reaction 2 6,7-dimethyl-8-(1-D-ribityl)lumazine + H(+) = 5-amino-6-(D-ribitylamino)uracil + riboflavin. It participates in cofactor biosynthesis; riboflavin biosynthesis; riboflavin from 2-hydroxy-3-oxobutyl phosphate and 5-amino-6-(D-ribitylamino)uracil: step 2/2. Catalyzes the dismutation of two molecules of 6,7-dimethyl-8-ribityllumazine, resulting in the formation of riboflavin and 5-amino-6-(D-ribitylamino)uracil. This chain is Riboflavin synthase (RIB5), found in Meyerozyma guilliermondii (strain ATCC 6260 / CBS 566 / DSM 6381 / JCM 1539 / NBRC 10279 / NRRL Y-324) (Yeast).